Here is a 192-residue protein sequence, read N- to C-terminus: MTEYLLLLVGTVLVNNFVLVKFLGLCPFMGVSKKLETAIGMGLATTFVLTLASVSAYLVETYILTPLGIEYLRTMSFILVIAVVVQFTEMVVHKTSPTLYRLLGIFLPLITTNCAVLGVALLNINENHNFIQSIIYGFGAAVGFSLVLILFAAMRERIAVADVPMPFKGASIAMITAGLMSLAFMGFTGLVK.

Transmembrane regions (helical) follow at residues 5-25 (LLLL…FLGL), 39-59 (IGMG…AYLV), 63-83 (ILTP…VIAV), 102-122 (LLGI…VALL), 134-154 (IIYG…FAAM), and 171-191 (SIAM…TGLV).

Belongs to the NqrDE/RnfAE family. As to quaternary structure, the complex is composed of six subunits: RnfA, RnfB, RnfC, RnfD, RnfE and RnfG.

It localises to the cell inner membrane. Part of a membrane-bound complex that couples electron transfer with translocation of ions across the membrane. In Vibrio atlanticus (strain LGP32) (Vibrio splendidus (strain Mel32)), this protein is Ion-translocating oxidoreductase complex subunit A.